The chain runs to 443 residues: DILAAFRVSPQPGVPPEEAGAAVAAESSTGTWTTVWTDGLTSLDRYKGRCYQIEPVPGEPDQYICYVAYPLDLFEEGSVTNMFTSIVGNVFGFKALRALRLEDLRIPVAYVKTFQGPPHGIQVERDKLNKYGRPLLGCTIKPKLGLSAKNYGRACYECLRGGLDFTKDDENVNSQPFMRWRDRFLFCAEAIYKSQAETGEIKGHYLNATAGTCEEMMKRAIFARELGVPIIMHDYLTGGFTANTSLAHYCRDNGLLLHIHRAMHAVIDRQKNHGIHFRVLAKALRMSGGDHIHSGTVVGKLEGERDITLGFVDLLRDDYIEKDRSRGIYFTQDWVSLPGVIPVASGGIHVWHMPALTEIFGDDSVLQFGGGTLGHPWGNAPGAVANRVALEACVQARNEGRDLAVEGNTIIREACKWSPELAAACEVWKEIKFEFAAMDTLDK.

The substrate site is built by Asn-89 and Thr-139. The Proton acceptor role is filled by Lys-141. A substrate-binding site is contributed by Lys-143. Mg(2+) contacts are provided by Lys-167, Asp-169, and Glu-170. Lys-167 carries the N6-carboxylysine modification. The active-site Proton acceptor is the His-260. Positions 261, 293, and 345 each coordinate substrate.

Belongs to the RuBisCO large chain family. Type I subfamily. Heterohexadecamer of 8 large chains and 8 small chains; disulfide-linked. The disulfide link is formed within the large subunit homodimers. Mg(2+) is required as a cofactor. In terms of processing, the disulfide bond which can form in the large chain dimeric partners within the hexadecamer appears to be associated with oxidative stress and protein turnover.

It is found in the plastid. The protein localises to the chloroplast. It carries out the reaction 2 (2R)-3-phosphoglycerate + 2 H(+) = D-ribulose 1,5-bisphosphate + CO2 + H2O. The enzyme catalyses D-ribulose 1,5-bisphosphate + O2 = 2-phosphoglycolate + (2R)-3-phosphoglycerate + 2 H(+). Functionally, ruBisCO catalyzes two reactions: the carboxylation of D-ribulose 1,5-bisphosphate, the primary event in carbon dioxide fixation, as well as the oxidative fragmentation of the pentose substrate in the photorespiration process. Both reactions occur simultaneously and in competition at the same active site. The chain is Ribulose bisphosphate carboxylase large chain from Callitriche heterophylla (Large water-starwort).